Here is a 210-residue protein sequence, read N- to C-terminus: Large ribosomal subunit protein uL4 (210 aa).

The segment covering 44–54 (KRQGTASTLTR) has biased composition (polar residues). Residues 44–94 (KRQGTASTLTRSEVRGGGRKPYKQKGTGRARQGSIRTPLRPGGGVIFGPKP) are disordered. Residues 60–71 (GGRKPYKQKGTG) show a composition bias toward basic residues.

It belongs to the universal ribosomal protein uL4 family. As to quaternary structure, part of the 50S ribosomal subunit.

In terms of biological role, one of the primary rRNA binding proteins, this protein initially binds near the 5'-end of the 23S rRNA. It is important during the early stages of 50S assembly. It makes multiple contacts with different domains of the 23S rRNA in the assembled 50S subunit and ribosome. Functionally, forms part of the polypeptide exit tunnel. The polypeptide is Large ribosomal subunit protein uL4 (Prochlorococcus marinus subsp. pastoris (strain CCMP1986 / NIES-2087 / MED4)).